The sequence spans 229 residues: Octanoyltransferase (229 aa).

Residues 30–223 (PDTPDTIWLV…QLQQRAQAHP (194 aa)) form the BPL/LPL catalytic domain. Residues 69-76 (RGGQITYH), 141-143 (ALG), and 154-156 (GVS) each bind substrate. The Acyl-thioester intermediate role is filled by Cys172.

This sequence belongs to the LipB family.

The protein localises to the cytoplasm. The catalysed reaction is octanoyl-[ACP] + L-lysyl-[protein] = N(6)-octanoyl-L-lysyl-[protein] + holo-[ACP] + H(+). Its pathway is protein modification; protein lipoylation via endogenous pathway; protein N(6)-(lipoyl)lysine from octanoyl-[acyl-carrier-protein]: step 1/2. Its function is as follows. Catalyzes the transfer of endogenously produced octanoic acid from octanoyl-acyl-carrier-protein onto the lipoyl domains of lipoate-dependent enzymes. Lipoyl-ACP can also act as a substrate although octanoyl-ACP is likely to be the physiological substrate. The protein is Octanoyltransferase of Ralstonia pickettii (strain 12J).